Reading from the N-terminus, the 315-residue chain is Replication factor C small subunit (315 aa).

43 to 50 contributes to the ATP binding site; sequence GSPGVGKT.

Belongs to the activator 1 small subunits family. RfcS subfamily. In terms of assembly, heteromultimer composed of small subunits (RfcS) and large subunits (RfcL).

In terms of biological role, part of the RFC clamp loader complex which loads the PCNA sliding clamp onto DNA. The chain is Replication factor C small subunit from Methanococcus maripaludis (strain C5 / ATCC BAA-1333).